We begin with the raw amino-acid sequence, 379 residues long: MKILRKNHPLLKIINHSFIDLPTPSNISSWWNFGSLLGMCLMIQILTGLFLAMHYTSDTTTAFSSVAHICRDVNYGWLIRYLHANGASMFFICLFIHVGRGIYYGSYALSETWNIGIILFLMTMATAFVGYVLPWGQMSFWGATVITNLLSAIPYIGSTLVEWIWGGFSVDKATLTRFFAFHFILPFIIAAFALVHLLFLHETGSNNPSGLNSDSDKIPFHPYYTTKDLLGIFLLLLVLMILALFFPDVLGDPDNFTPANPLNTPAHIKPEWYFLFAYAILRSIPNKLGGVLALVLSILILAAFPLLNTSKQHGLIFRPVTQVIYWIFIANLLVLTWIGGQPVEYPFTMIGQIASITYFAIITILMPISNTIENNIIKL.

Transmembrane regions (helical) follow at residues 33-53 (FGSLLGMCLMIQILTGLFLAM), 77-98 (WLIRYLHANGASMFFICLFIHV), 113-133 (WNIGIILFLMTMATAFVGYVL), and 178-198 (FFAFHFILPFIIAAFALVHLL). 2 residues coordinate heme b: histidine 83 and histidine 97. Heme b-binding residues include histidine 182 and histidine 196. Histidine 201 serves as a coordination point for a ubiquinone. The next 4 helical transmembrane spans lie at 226 to 246 (TKDLLGIFLLLLVLMILALFF), 288 to 308 (LGGVLALVLSILILAAFPLLN), 320 to 340 (VTQVIYWIFIANLLVLTWIGG), and 347 to 367 (FTMIGQIASITYFAIITILMP).

Belongs to the cytochrome b family. The cytochrome bc1 complex contains 11 subunits: 3 respiratory subunits (MT-CYB, CYC1 and UQCRFS1), 2 core proteins (UQCRC1 and UQCRC2) and 6 low-molecular weight proteins (UQCRH/QCR6, UQCRB/QCR7, UQCRQ/QCR8, UQCR10/QCR9, UQCR11/QCR10 and a cleavage product of UQCRFS1). This cytochrome bc1 complex then forms a dimer. Requires heme b as cofactor.

It is found in the mitochondrion inner membrane. Component of the ubiquinol-cytochrome c reductase complex (complex III or cytochrome b-c1 complex) that is part of the mitochondrial respiratory chain. The b-c1 complex mediates electron transfer from ubiquinol to cytochrome c. Contributes to the generation of a proton gradient across the mitochondrial membrane that is then used for ATP synthesis. This chain is Cytochrome b (MT-CYB), found in Akodon fumeus (Smoky grass mouse).